The sequence spans 321 residues: Protein-L-histidine N-pros-methyltransferase (321 aa).

Residues 1-24 (MRLWLCWLGCYTLLLWALRRRMWA) form the signal peptide. N-linked (GlcNAc...) asparagine glycosylation is present at N89. 3 residues coordinate S-adenosyl-L-homocysteine: E177, N213, and Y298.

The protein belongs to the METTL9 family.

The protein localises to the endoplasmic reticulum. It localises to the mitochondrion. It carries out the reaction L-histidyl-[protein] + S-adenosyl-L-methionine = N(pros)-methyl-L-histidyl-[protein] + S-adenosyl-L-homocysteine + H(+). Functionally, protein-histidine N-methyltransferase that specifically catalyzes 1-methylhistidine (pros-methylhistidine) methylation of target proteins. Mediates methylation of proteins with a His-x-His (HxH) motif (where 'x' is preferably a small amino acid); 1-methylhistidine modification may affect the binding of zinc and other metals to its target proteins. In Gallus gallus (Chicken), this protein is Protein-L-histidine N-pros-methyltransferase.